The sequence spans 328 residues: MSMANFTGGRNSCTFHEEFKQVLLPLVYSVVFLLGLPLNAVVIGQIWLARKALTRTTIYMLNLAMADLLYVCSLPLLIYNYTQKDYWPFGDFTCKFVRFQFYTNLHGSILFLTCISVQRYMGICHPLASWHKKKGKKLTWLVCAAVWFIVIAQCLPTFVFASTGTQRNRTVCYDLSPPDRSTSYFPYGITLTITGFLLPFAAILACYCSMARILCQKDELIGLAVHKKKDKAVRMIIIVVIVFSISFFPFHLTKTIYLIVRSSASLPCPTLQAFAIAYKCTRPFASMNSVLDPILFYFTQRKFRESTRYLLDKMSSKWRQDHCISYGS.

At 1–22 (MSMANFTGGRNSCTFHEEFKQV) the chain is on the extracellular side. N-linked (GlcNAc...) asparagine glycosylation occurs at Asn-5. The chain crosses the membrane as a helical span at residues 23 to 43 (LLPLVYSVVFLLGLPLNAVVI). The Cytoplasmic segment spans residues 44 to 57 (GQIWLARKALTRTT). A helical membrane pass occupies residues 58–78 (IYMLNLAMADLLYVCSLPLLI). Residues 79–96 (YNYTQKDYWPFGDFTCKF) are Extracellular-facing. Residues Cys-94 and Cys-172 are joined by a disulfide bond. Residues 97–117 (VRFQFYTNLHGSILFLTCISV) form a helical membrane-spanning segment. The Cytoplasmic segment spans residues 118 to 139 (QRYMGICHPLASWHKKKGKKLT). A helical membrane pass occupies residues 140-160 (WLVCAAVWFIVIAQCLPTFVF). Residues 161 to 189 (ASTGTQRNRTVCYDLSPPDRSTSYFPYGI) are Extracellular-facing. The chain crosses the membrane as a helical span at residues 190-210 (TLTITGFLLPFAAILACYCSM). The Cytoplasmic segment spans residues 211-231 (ARILCQKDELIGLAVHKKKDK). The chain crosses the membrane as a helical span at residues 232–252 (AVRMIIIVVIVFSISFFPFHL). Topologically, residues 253 to 275 (TKTIYLIVRSSASLPCPTLQAFA) are extracellular. The chain crosses the membrane as a helical span at residues 276 to 298 (IAYKCTRPFASMNSVLDPILFYF). Residues 299 to 323 (TQRKFRESTRYLLDKMSSKWRQDHC) lie on the Cytoplasmic side of the membrane.

The protein belongs to the G-protein coupled receptor 1 family.

The protein resides in the cell membrane. Its function is as follows. Receptor for extracellular ADP &gt; UTP &gt; ATP = UDP. The activity of this receptor is mediated by G proteins which activate a phosphatidylinositol-calcium second messenger system. This is P2Y purinoceptor 3 (P2RY3) from Gallus gallus (Chicken).